Consider the following 260-residue polypeptide: MQAANDHFFTGLSKKGPVRKENQDFYGFSFNQNNLLIVVCDGLGGYKGGKIASNLVGKLFLSLFEGFEFNQWDETTVKKWFENTLIQARFQLENCFQTVYEAQIQFARMASTLVLGILTKSDIYIFWIGDSRAYLLFENQAKLVTKDHNLYNQLVAMNADEKLLLSYSNQLLALTNTISKETKRPLVYGFYNTKIEQQEFLLLCSDGLYNFVEKELFFEIITNSKNLKQAVFNLYRKSIENASNDNITAALVNLQKWKQS.

The region spanning F9–L254 is the PPM-type phosphatase domain.

It catalyses the reaction O-phospho-L-seryl-[protein] + H2O = L-seryl-[protein] + phosphate. It carries out the reaction O-phospho-L-threonyl-[protein] + H2O = L-threonyl-[protein] + phosphate. This Mycoplasma genitalium (strain ATCC 33530 / DSM 19775 / NCTC 10195 / G37) (Mycoplasmoides genitalium) protein is Putative protein phosphatase.